Reading from the N-terminus, the 652-residue chain is Adhesion G protein-coupled receptor E3 (652 aa).

Positions 1-21 (MQGPLLLPGLCFLLSLFGAVT) are cleaved as a signal peptide. At 22–357 (QKTKTSCAKC…TSQEEDPVLT (336 aa)) the chain is on the extracellular side. One can recognise an EGF-like 1 domain in the interval 24 to 66 (TKTSCAKCPPNASCVNNTHCTCNHGYTSGSGQKLFTFPLETCN). Cystine bridges form between C28-C37, C31-C43, C45-C65, C71-C85, C79-C94, and C96-C117. 2 N-linked (GlcNAc...) asparagine glycosylation sites follow: N34 and N39. Residues 67 to 118 (DINECTPPYSVYCGFNAVCYNVEGSFYCQCVPGYRLHSGNEQFSNSNENTCQ) form the EGF-like 2; calcium-binding domain. N-linked (GlcNAc...) asparagine glycosylation is found at N145, N189, N202, N250, N279, N327, and N334. The GAIN-B domain maps to 183-351 (KVLKIQNDSV…AVLMALTSQE (169 aa)). Cystine bridges form between C304-C333 and C321-C335. The interval 304–351 (CVYWKSTGQGSQWSRDGCFLIHVNKSHTMCNCSHLSSFAVLMALTSQE) is GPS. Residues 358-378 (VITYVGLSVSLLCLLLAALTF) form a helical membrane-spanning segment. Over 379–389 (LLCKAIRNTST) the chain is Cytoplasmic. Residues 390–410 (SLHLQLSLCLFLAHLLFLVGI) traverse the membrane as a helical segment. The Extracellular segment spans residues 411–416 (DRTEPK). A helical transmembrane segment spans residues 417–437 (VLCSIIAGALHYLYLAAFTWM). The Cytoplasmic segment spans residues 438–464 (LLEGVHLFLTARNLTVVNYSSINRLMK). Residues 465–485 (WIMFPVGYGVPAVTVAISAAS) traverse the membrane as a helical segment. Residues 486-508 (WPHLYGTADRCWLHLDQGFMWSF) lie on the Extracellular side of the membrane. The helical transmembrane segment at 509–529 (LGPVCAIFSANLVLFILVFWI) threads the bilayer. The Cytoplasmic portion of the chain corresponds to 530-557 (LKRKLSSLNSEVSTIQNTRMLAFKATAQ). The chain crosses the membrane as a helical span at residues 558–578 (LFILGCTWCLGLLQVGPAAQV). Residues 579 to 580 (MA) are Extracellular-facing. The chain crosses the membrane as a helical span at residues 581–601 (YLFTIINSLQGFFIFLVYCLL). At 602–652 (SQQVQKQYQKWFREIVKSKSESETYTLSSKMGPDSKPSEGDVFPGQVKRKY) the chain is on the cytoplasmic side. Residues 621–652 (SESETYTLSSKMGPDSKPSEGDVFPGQVKRKY) form a disordered region.

The protein belongs to the G-protein coupled receptor 2 family. Adhesion G-protein coupled receptor (ADGR) subfamily. In terms of assembly, forms a heterodimer, consisting of a large extracellular region (alpha subunit) non-covalently linked to a seven-transmembrane moiety (beta subunit). In terms of processing, proteolytically cleaved into 2 subunits, an extracellular alpha subunit and a seven-transmembrane subunit. As to expression, displays a predominantly leukocyte-restricted expression, with highest levels in neutrophils, monocytes and macrophages.

It is found in the cell membrane. The protein resides in the secreted. Functionally, orphan receptor that may play a role myeloid-myeloid interactions during immune and inflammatory responses. A ligand for the soluble form of this receptor is present at the surface of monocytes-derived macrophages and activated neutrophils. This chain is Adhesion G protein-coupled receptor E3, found in Homo sapiens (Human).